The following is a 1194-amino-acid chain: Rho-associated protein kinase let-502 (1194 aa).

The Protein kinase domain maps to 68–330 (FRQLKVIGRG…VDEIRNHKFF (263 aa)). ATP contacts are provided by residues 74–82 (IGRGAFGEV) and lysine 97. The Proton acceptor role is filled by aspartate 190. Residues 331–402 (KNDEWTFETL…SNEYSPVKKL (72 aa)) enclose the AGC-kinase C-terminal domain. 2 coiled-coil regions span residues 436-844 (EEQY…MAKR) and 875-933 (GRIL…EYPQ). The RhoBD domain maps to 784–846 (EQNLKHIENQ…LEEEMAKRQP (63 aa)). In terms of domain architecture, PH spans 961–1171 (IQIDGWLSLR…SQLRRFIEAS (211 aa)). The Phorbol-ester/DAG-type zinc finger occupies 1085 to 1138 (RHDFQELSYHTRTYCDDCGKKLSDFIRPTPAFECKNCHYKTHKEHIAQGTITMC).

The protein belongs to the protein kinase superfamily. AGC Ser/Thr protein kinase family. In terms of assembly, interacts with rho-1. The cofactor is Mg(2+).

The protein localises to the cytoplasm. It is found in the cytoskeleton. It localises to the cleavage furrow. It catalyses the reaction L-seryl-[protein] + ATP = O-phospho-L-seryl-[protein] + ADP + H(+). The enzyme catalyses L-threonyl-[protein] + ATP = O-phospho-L-threonyl-[protein] + ADP + H(+). With respect to regulation, activated by rho-1 binding. In terms of biological role, negatively regulates mel-11 to relieve the inhibition of mlc-4, allowing contraction of the circumferentially oriented microfilaments in epidermal cells and thereby regulating myosin II contractility during spermathecal contraction, cleavage furrow contraction in early embryos, and embryonic elongation and morphogenesis. Required for P-cell migration. May also play a role in oocyte cellularization. The protein is Rho-associated protein kinase let-502 of Caenorhabditis briggsae.